The sequence spans 815 residues: Calpain-3 (815 aa).

The interval 7 to 36 is disordered; it reads ASVAPRTAAEPRSPGPVPHPAQSKATEAGG. Residues 74–417 form the Calpain catalytic domain; that stretch reads LYVDPEFPPD…FTKLEICNLT (344 aa). Residues C129, H334, and N358 contribute to the active site. Residues 418–586 are domain III; the sequence is ADALQSDKLQ…KRNLSEEVEN (169 aa). The interval 587 to 649 is linker; the sequence is TISVDRPVPI…QESEEQQQFR (63 aa). The disordered stretch occupies residues 605–646; that stretch reads SNKELGVDQESEEGKGKTSPDKQEQSPQPQPGSSDQESEEQQ. Residues 616-628 are compositionally biased toward basic and acidic residues; the sequence is EEGKGKTSPDKQE. The span at 629-639 shows a compositional bias: low complexity; that stretch reads QSPQPQPGSSD. EF-hand domains lie at 643-677, 686-719, 716-751, and 781-815; these read EEQQQFRNIFKQIAGDDMEICADELKKVLNTVVNK, FTLESCRSMIALMDTDGSGKLNLQEFHHLWNKIK, NKIKAWQKIFKHYDTDQSGTINSYEMRNAVNDAGFH, and VRLEGMFRAFHAFDKDGDGIIKLNVLEWLQLTMYA. The interval 650–815 is domain IV; that stretch reads NIFKQIAGDD…LEWLQLTMYA (166 aa). Ca(2+)-binding residues include A656, D659, E661, E666, D699, D701, S703, K705, E710, D729, D731, S733, T735, E740, D794, D796, D798, and I800.

It belongs to the peptidase C2 family. As to quaternary structure, homodimer; via EF-hand domain 4. Interacts with TTN/titin. Interacts with CMYA5; this interaction, which results in CMYA5 proteolysis, may protect CAPN3 from autolysis. Interacts with SIMC1. Interacts with UTP25; the interaction is required for CAPN3 translocation to the nucleolus.

The protein localises to the cytoplasm. It is found in the nucleus. It localises to the nucleolus. It carries out the reaction Broad endopeptidase activity.. Its activity is regulated as follows. Activated by micromolar concentrations of calcium and inhibited by calpastatin. In terms of biological role, calcium-regulated non-lysosomal thiol-protease. Proteolytically cleaves CTBP1. Mediates, with UTP25, the proteasome-independent degradation of p53/TP53. The polypeptide is Calpain-3 (CAPN3) (Macaca fascicularis (Crab-eating macaque)).